The chain runs to 195 residues: Imidazoleglycerol-phosphate dehydratase (195 aa).

It belongs to the imidazoleglycerol-phosphate dehydratase family.

The protein resides in the cytoplasm. It carries out the reaction D-erythro-1-(imidazol-4-yl)glycerol 3-phosphate = 3-(imidazol-4-yl)-2-oxopropyl phosphate + H2O. It functions in the pathway amino-acid biosynthesis; L-histidine biosynthesis; L-histidine from 5-phospho-alpha-D-ribose 1-diphosphate: step 6/9. This is Imidazoleglycerol-phosphate dehydratase from Leuconostoc mesenteroides subsp. mesenteroides (strain ATCC 8293 / DSM 20343 / BCRC 11652 / CCM 1803 / JCM 6124 / NCDO 523 / NBRC 100496 / NCIMB 8023 / NCTC 12954 / NRRL B-1118 / 37Y).